A 239-amino-acid polypeptide reads, in one-letter code: 2,3,4,5-tetrahydropyridine-2,6-dicarboxylate N-acetyltransferase (239 aa).

Belongs to the transferase hexapeptide repeat family. DapH subfamily.

It catalyses the reaction (S)-2,3,4,5-tetrahydrodipicolinate + acetyl-CoA + H2O = L-2-acetamido-6-oxoheptanedioate + CoA. It participates in amino-acid biosynthesis; L-lysine biosynthesis via DAP pathway; LL-2,6-diaminopimelate from (S)-tetrahydrodipicolinate (acetylase route): step 1/3. Functionally, catalyzes the transfer of an acetyl group from acetyl-CoA to tetrahydrodipicolinate. The sequence is that of 2,3,4,5-tetrahydropyridine-2,6-dicarboxylate N-acetyltransferase from Staphylococcus aureus (strain MRSA252).